Reading from the N-terminus, the 169-residue chain is Type II secretion system protein H (169 aa).

Residues 1-29 constitute a propeptide, leader sequence; the sequence is MRVARLPLLHPHRAAPVVRRQLRGSSLLE. Position 30 is an N-methylmethionine (Met30). A helical transmembrane segment spans residues 32–52; the sequence is LVIALIALAGVLAAAALTGGI.

This sequence belongs to the GSP H family. As to quaternary structure, type II secretion is composed of four main components: the outer membrane complex, the inner membrane complex, the cytoplasmic secretion ATPase and the periplasm-spanning pseudopilus. Interacts with core component XpsG. Interacts with minor pseudopilins XpsI and XpsJ. Post-translationally, cleaved by prepilin peptidase. Methylated by prepilin peptidase at the amino group of the N-terminal phenylalanine once the leader sequence is cleaved by prepilin peptidase.

It is found in the cell inner membrane. Its function is as follows. Component of the type II secretion system required for the energy-dependent secretion of extracellular factors such as proteases and toxins from the periplasm. Part of the pseudopilus tip complex that is critical for the recognition and binding of secretion substrates. The chain is Type II secretion system protein H (xpsH) from Xanthomonas campestris pv. campestris (strain ATCC 33913 / DSM 3586 / NCPPB 528 / LMG 568 / P 25).